The chain runs to 532 residues: Phosphoenolpyruvate carboxykinase (ATP) (532 aa).

Arg-60, Tyr-194, and Lys-200 together coordinate substrate. ATP contacts are provided by residues Lys-200, His-219, and 237-245 (GLSGTGKTT). Residues Lys-200 and His-219 each contribute to the Mn(2+) site. Residue Asp-258 participates in Mn(2+) binding. ATP is bound by residues Glu-286, Arg-324, and Thr-449. Residue Arg-324 participates in substrate binding.

This sequence belongs to the phosphoenolpyruvate carboxykinase (ATP) family. Mn(2+) is required as a cofactor.

Its subcellular location is the cytoplasm. The catalysed reaction is oxaloacetate + ATP = phosphoenolpyruvate + ADP + CO2. Its pathway is carbohydrate biosynthesis; gluconeogenesis. In terms of biological role, involved in the gluconeogenesis. Catalyzes the conversion of oxaloacetate (OAA) to phosphoenolpyruvate (PEP) through direct phosphoryl transfer between the nucleoside triphosphate and OAA. This Ruegeria pomeroyi (strain ATCC 700808 / DSM 15171 / DSS-3) (Silicibacter pomeroyi) protein is Phosphoenolpyruvate carboxykinase (ATP).